We begin with the raw amino-acid sequence, 295 residues long: Ribosomal RNA small subunit methyltransferase A (295 aa).

Asn33, Val35, Gly60, Glu81, Asp111, and Asn129 together coordinate S-adenosyl-L-methionine.

This sequence belongs to the class I-like SAM-binding methyltransferase superfamily. rRNA adenine N(6)-methyltransferase family. RsmA subfamily.

It localises to the cytoplasm. It carries out the reaction adenosine(1518)/adenosine(1519) in 16S rRNA + 4 S-adenosyl-L-methionine = N(6)-dimethyladenosine(1518)/N(6)-dimethyladenosine(1519) in 16S rRNA + 4 S-adenosyl-L-homocysteine + 4 H(+). In terms of biological role, specifically dimethylates two adjacent adenosines (A1518 and A1519) in the loop of a conserved hairpin near the 3'-end of 16S rRNA in the 30S particle. May play a critical role in biogenesis of 30S subunits. This is Ribosomal RNA small subunit methyltransferase A from Corynebacterium diphtheriae (strain ATCC 700971 / NCTC 13129 / Biotype gravis).